A 1205-amino-acid chain; its full sequence is Transcriptional-regulating factor 1 (1205 aa).

6 disordered regions span residues 201–226 (YQQV…VGQH), 270–317 (YPQP…QRQS), 332–351 (QHLQ…SYHR), 390–500 (PQSH…QTKG), 527–583 (LNGH…PEAE), and 601–629 (PKPS…MSDD). Low complexity-rich tracts occupy residues 291 to 317 (QQQQ…QRQS) and 332 to 342 (QHLQEQQQPSM). Polar residues-rich tracts occupy residues 406–417 (KTYSSDRQTPAM), 437–447 (SEMTRVTSTLP), and 487–498 (QSGSPESSSGQT). Serine 490 carries the phosphoserine modification. The C2H2-type 1 zinc finger occupies 512-534 (LTCSICLKEFKSLPALNGHMRSH). The segment covering 551 to 579 (APPPQPQPQPQPQQPLPPPPPPPPPPQLP) has biased composition (pro residues). Residues 604-613 (SSQGFTNSVA) show a composition bias toward polar residues. N6-acetyllysine occurs at positions 639 and 646. At threonine 773 the chain carries Phosphothreonine. In terms of domain architecture, ELM2 spans 785–876 (PRINIGLRFQ…ATLEMLLLRK (92 aa)). Positions 891–942 (AGSDKWTSLERKLFNKALATYSKDFIFVQKMVKSKTVAQCVEYYYTWKKIMR) constitute an SANT domain. A compositionally biased stretch (acidic residues) spans 956-975 (DDCMTSEEEEEAEEEEEDPE). 2 disordered regions span residues 956-1016 (DDCM…QQPS) and 1043-1087 (HGGT…GETD). Threonine 960 is modified (phosphothreonine). A Phosphoserine modification is found at serine 961. Over residues 976–990 (EDRKSIKEEESEVAK) the composition is skewed to basic and acidic residues. A C2H2-type 2 zinc finger spans residues 1019-1043 (FICEMPNCGAVFSSRQALNGHARIH). The segment covering 1072-1086 (SVKSSPSHSTTSGET) has biased composition (low complexity). The C2H2-type 3 zinc-finger motif lies at 1092-1114 (FPCKECGKVFFKIKSRNAHMKTH).

As to quaternary structure, interacts with CREBBP and EP300. Interacts with DNTTIP1 and DNTT. Highly expressed in kidney, lung and brain. In the brain, expression was seen in the basal ganglia, hippocampus, piriform cortex, cerebral cortex, ventromedial nucleus of the hypothalamus and the dorsal and superior central nuclei of the raphe.

It localises to the nucleus. Binds DNA and activates transcription of CYP11A1. Interaction with CREBBP and EP300 results in a synergistic transcriptional activation of CYP11A1. The chain is Transcriptional-regulating factor 1 (Trerf1) from Mus musculus (Mouse).